Reading from the N-terminus, the 336-residue chain is Glycerol-3-phosphate dehydrogenase [NAD(P)+] (336 aa).

Positions 11, 12, and 106 each coordinate NADPH. Residues Lys106, Gly134, and Ser136 each contribute to the sn-glycerol 3-phosphate site. Residue Ala138 participates in NADPH binding. 5 residues coordinate sn-glycerol 3-phosphate: Lys189, Asp242, Ser252, Arg253, and Asn254. Lys189 functions as the Proton acceptor in the catalytic mechanism. Arg253 is a binding site for NADPH. 2 residues coordinate NADPH: Val277 and Glu279.

Belongs to the NAD-dependent glycerol-3-phosphate dehydrogenase family.

It localises to the cytoplasm. It catalyses the reaction sn-glycerol 3-phosphate + NAD(+) = dihydroxyacetone phosphate + NADH + H(+). The enzyme catalyses sn-glycerol 3-phosphate + NADP(+) = dihydroxyacetone phosphate + NADPH + H(+). It functions in the pathway membrane lipid metabolism; glycerophospholipid metabolism. Functionally, catalyzes the reduction of the glycolytic intermediate dihydroxyacetone phosphate (DHAP) to sn-glycerol 3-phosphate (G3P), the key precursor for phospholipid synthesis. The chain is Glycerol-3-phosphate dehydrogenase [NAD(P)+] from Agathobacter rectalis (strain ATCC 33656 / DSM 3377 / JCM 17463 / KCTC 5835 / VPI 0990) (Eubacterium rectale).